The sequence spans 779 residues: MASQDISYQYKSQQEHYPNEKISDSYVQKQNSKLTQVIQQCFSKAVKIIIQSRTVPPAAASPLLNPALHDDSASGNKINRWFNLHIQNSQDLPKDDLKLWKSNHLQSMPPMIIETYLDLRQLTSSQTIVLNDDNGNPWAVAKSGGKKQEVVLERWLIEFDHTDASGSIVDELPLIYKQAIILFRSIYGFARLMPAFKLKKRLLINKSSTKLNKLTIGNKILDGKQPISSKGRIGLSKTIIPRQMLTTDSHMSQKHFQPIQTSLGTLKISIAYRNHCDFCIHDNEEVLSTHFISMDSTPLTESGHGHTKANNTSMSVSPCSSGHPALREGSPTKRGTPPTAIQPFKVGSISNSPPPASHTPNSGYGGSLERRISITSNRSTSNASLFAMLRNPRSSTSSTHTTSNIPIAPSSSSNSTNATNMNNMSYPRSISSSHGSNMQHDDSMFSNPDSTTNTPRFSSSFGSRASRRYSNTSVRQSTPVAASTLTGGSPLSGLYIDDDISEFVRSIDSKADLRFSNSYTAHNSGEPKNNMGSPSGGDALNKFQMMKSHHQQLGDSVNASLILQHNNAVSGSGSGFGVSNSRHSSTSRKSSHSIRSPSPSMSGLYDVVPGSYGRSERRSSSGAGVPGQLSLPSGGGLAAHSPSATEPTSAATITPRETNFNFSNASFLRSASKLSATPVTSTTTAHATIHSVTGMATSPSLYQRTKVGSSIHYENVFEDDDDDEMVMKKPVVTSSGRDEEQLQHKQMKVVSIEKDAGANNFDDDDLLFTMSDMNLTKSS.

4 disordered regions span residues 298-368 (PLTE…GGSL), 392-488 (PRSS…LTGG), 520-541 (TAHNSGEPKNNMGSPSGGDALN), and 571-652 (GSGS…SAAT). The segment covering 308 to 320 (KANNTSMSVSPCS) has biased composition (polar residues). Over residues 394–425 (SSTSSTHTTSNIPIAPSSSSNSTNATNMNNMS) the composition is skewed to low complexity. Positions 426–455 (YPRSISSSHGSNMQHDDSMFSNPDSTTNTP) are enriched in polar residues. Residues 456-470 (RFSSSFGSRASRRYS) are compositionally biased toward low complexity. Composition is skewed to polar residues over residues 471–488 (NTSVRQSTPVAASTLTGG) and 520–533 (TAHNSGEPKNNMGS). Composition is skewed to low complexity over residues 593–602 (SIRSPSPSMS) and 620–632 (SSGAGVPGQLSLP). A compositionally biased stretch (polar residues) spans 642-652 (PSATEPTSAAT).

It belongs to the ATG13 family. Fungi subfamily. Interacts with ATG1 to form the ATG1-ATG13 kinase complex.

The protein localises to the cytoplasm. Its subcellular location is the preautophagosomal structure. Functionally, activates the ATG1 kinase in a nutritional condition dependent manner through the TOR pathway, leading to autophagy. Also involved in cytoplasm to vacuole transport (Cvt) and more specifically in Cvt vesicle formation. Seems to play a role in the switching machinery regulating the conversion between the Cvt pathway and autophagy. Finally, ATG13 is also required for glycogen storage during stationary phase. The chain is Autophagy-related protein 13 (ATG13) from Scheffersomyces stipitis (strain ATCC 58785 / CBS 6054 / NBRC 10063 / NRRL Y-11545) (Yeast).